Reading from the N-terminus, the 359-residue chain is Pyruvate dehydrogenase E1 component subunit beta, mitochondrial (359 aa).

The N-terminal 30 residues, M1 to A30, are a transit peptide targeting the mitochondrion. Y67 is modified (phosphotyrosine). E89 contributes to the thiamine diphosphate binding site. 5 residues coordinate K(+): I142, A190, I191, D193, and N195. K354 is subject to N6-acetyllysine.

Heterotetramer of two PDHA1 and two PDHB subunits. The heterotetramer interacts with DLAT, and is part of the multimeric pyruvate dehydrogenase complex that contains multiple copies of pyruvate dehydrogenase (E1), dihydrolipoamide acetyltransferase (DLAT, E2) and lipoamide dehydrogenase (DLD, E3). These subunits are bound to an inner core composed of about 48 DLAT and 12 PDHX molecules. Interacts with DLAT. Thiamine diphosphate is required as a cofactor.

The protein resides in the mitochondrion matrix. The enzyme catalyses N(6)-[(R)-lipoyl]-L-lysyl-[protein] + pyruvate + H(+) = N(6)-[(R)-S(8)-acetyldihydrolipoyl]-L-lysyl-[protein] + CO2. Its function is as follows. The pyruvate dehydrogenase complex catalyzes the overall conversion of pyruvate to acetyl-CoA and CO(2), and thereby links the glycolytic pathway to the tricarboxylic cycle. This chain is Pyruvate dehydrogenase E1 component subunit beta, mitochondrial (Pdhb), found in Mus musculus (Mouse).